We begin with the raw amino-acid sequence, 365 residues long: Class I histocompatibility antigen, Gogo-A*0201 alpha chain (365 aa).

The signal sequence occupies residues 1–24; it reads MAVMAPRTLLLLLLGALALTQTWA. The alpha-1 stretch occupies residues 25–114; sequence GSHSMRYFST…LRGYYNQSEA (90 aa). Residues 25-308 are Extracellular-facing; it reads GSHSMRYFST…EPSSQPTIPI (284 aa). Asparagine 110 is a glycosylation site (N-linked (GlcNAc...) asparagine). The tract at residues 115–206 is alpha-2; that stretch reads GSHTIQKMYG…ENGKETLQRT (92 aa). 2 disulfides stabilise this stretch: cysteine 125–cysteine 188 and cysteine 227–cysteine 283. The alpha-3 stretch occupies residues 207–298; that stretch reads DAPKTHMTHH…SLPKPLTLRW (92 aa). The Ig-like C1-type domain maps to 209–295; that stretch reads PKTHMTHHAV…QHESLPKPLT (87 aa). The connecting peptide stretch occupies residues 299–308; sequence EPSSQPTIPI. The helical transmembrane segment at 309–332 threads the bilayer; it reads VGIIAGLVLFGAVIAGAVIAAVRW. The Cytoplasmic segment spans residues 333–365; that stretch reads RRKSSDRKGGSYSQAASSDSAQGSDVSLTACKV. A disordered region spans residues 338 to 365; it reads DRKGGSYSQAASSDSAQGSDVSLTACKV. The span at 342–359 shows a compositional bias: low complexity; that stretch reads GSYSQAASSDSAQGSDVS. A Phosphoserine modification is found at serine 343. Tyrosine 344 carries the phosphotyrosine modification. A phosphoserine mark is found at serine 345, serine 349, serine 350, serine 352, serine 356, and serine 359.

The protein belongs to the MHC class I family. As to quaternary structure, heterodimer of an alpha chain and a beta chain (beta-2-microglobulin).

It localises to the membrane. Its function is as follows. Involved in the presentation of foreign antigens to the immune system. This chain is Class I histocompatibility antigen, Gogo-A*0201 alpha chain, found in Gorilla gorilla gorilla (Western lowland gorilla).